We begin with the raw amino-acid sequence, 1035 residues long: FACT complex subunit SPT16 (1035 aa).

Residues 432 to 500 are a coiled coil; the sequence is FLKKEDEEEE…AKRRLTEQKG (69 aa). Disordered stretches follow at residues 491-520 and 920-1035; these read AKRRLTEQKGGQQTMKARKSNVSYKNASQV and EQGG…KRKK. The segment covering 499-519 has biased composition (polar residues); that stretch reads KGGQQTMKARKSNVSYKNASQ. Positions 929-985 are enriched in acidic residues; that stretch reads PDGEGSDAAEGDSESELDDETFNPSEDEEEEEEDSDEDYSDETEDSVDSEESADSEE. Positions 986–1006 are enriched in basic and acidic residues; the sequence is ESGKDWDELEEEARKADRESL.

The protein belongs to the peptidase M24 family. SPT16 subfamily. In terms of assembly, component of the FACT complex (also called the DUF complex), a stable heterodimer of ssrp1 and supt16h. May also be a component of a ck2-spt16-ssrp1 complex composed of ssrp1, supt16h, csnk2a1, csnk2a2 and csnk2b. The FACT complex may also interact with vcp.

The protein resides in the nucleus. It is found in the chromosome. Functionally, component of the FACT complex, a general chromatin factor that acts to reorganize nucleosomes. The FACT complex is involved in multiple processes that require DNA as a template such as mRNA elongation, DNA replication and DNA repair. During transcription elongation the FACT complex acts as a histone chaperone that both destabilizes and restores nucleosomal structure. It facilitates the passage of RNA polymerase II and transcription by promoting the dissociation of one histone H2A-H2B dimer from the nucleosome, then subsequently promotes the reestablishment of the nucleosome following the passage of RNA polymerase II. This chain is FACT complex subunit SPT16 (supt16h), found in Xenopus laevis (African clawed frog).